The following is a 204-amino-acid chain: ATP synthase subunit b 2 (204 aa).

The tract at residues 8–28 (AQSSTTEGAEAHDAAAAGEVH) is disordered. Residues 56-76 (LLWLAITFGLFYLLMSKVIIP) traverse the membrane as a helical segment.

Belongs to the ATPase B chain family. F-type ATPases have 2 components, F(1) - the catalytic core - and F(0) - the membrane proton channel. F(1) has five subunits: alpha(3), beta(3), gamma(1), delta(1), epsilon(1). F(0) has three main subunits: a(1), b(2) and c(10-14). The alpha and beta chains form an alternating ring which encloses part of the gamma chain. F(1) is attached to F(0) by a central stalk formed by the gamma and epsilon chains, while a peripheral stalk is formed by the delta and b chains.

It localises to the cell inner membrane. Functionally, f(1)F(0) ATP synthase produces ATP from ADP in the presence of a proton or sodium gradient. F-type ATPases consist of two structural domains, F(1) containing the extramembraneous catalytic core and F(0) containing the membrane proton channel, linked together by a central stalk and a peripheral stalk. During catalysis, ATP synthesis in the catalytic domain of F(1) is coupled via a rotary mechanism of the central stalk subunits to proton translocation. Its function is as follows. Component of the F(0) channel, it forms part of the peripheral stalk, linking F(1) to F(0). The b'-subunit is a diverged and duplicated form of b found in plants and photosynthetic bacteria. This Rhizobium meliloti (strain 1021) (Ensifer meliloti) protein is ATP synthase subunit b 2 (atpF2).